A 38-amino-acid chain; its full sequence is Histatin-1 (38 aa).

The disordered stretch occupies residues 1–38 (DSHEERHHGRHGHHKYGRKFHEKHHSHRGYRSNYLYDN). Ser-2 carries the post-translational modification Phosphoserine. Over residues 8 to 30 (HGRHGHHKYGRKFHEKHHSHRGY) the composition is skewed to basic residues.

This sequence belongs to the histatin/statherin family.

The protein resides in the secreted. Its function is as follows. Histatins (Hsts) are cationic and histidine-rich secreted peptides mainly synthesized by saliva glands of humans and higher primates. Hsts are considered to be major precursors of the protective proteinaceous structure on tooth surfaces (enamel pellicle). The polypeptide is Histatin-1 (HTN1) (Macaca fascicularis (Crab-eating macaque)).